Consider the following 289-residue polypeptide: MTQIADPSILFPPLVKGAAQAITDYRMIEEGDRVMVCLSGGKDSYTLLDILLHLQKRAPIHFEVVAVNLDQGQPGFPKHVLPEYLTRLGVPFDILTEDTYSIVKEKTPEGKTTCALCSRLRRGILYRHAREIGATKIALGHHRDDILETLFMNMFFGARLKAMPPKLQSDDGTNVVIRPLAYLAERDIERYAQAKGFPIIPCNLCGSQPNLQRRVVGEMLEGWEREHPGRLQNILRSLTRVTPSHLLDRDLYDFAGLSVTPAEGDRGFDGEEYPEREFLAGLSNLTLLG.

A PP-loop motif motif is present at residues 39 to 44; that stretch reads SGGKDS. 3 residues coordinate [4Fe-4S] cluster: C114, C117, and C205.

This sequence belongs to the TtcA family. As to quaternary structure, homodimer. It depends on Mg(2+) as a cofactor. Requires [4Fe-4S] cluster as cofactor.

Its subcellular location is the cytoplasm. It catalyses the reaction cytidine(32) in tRNA + S-sulfanyl-L-cysteinyl-[cysteine desulfurase] + AH2 + ATP = 2-thiocytidine(32) in tRNA + L-cysteinyl-[cysteine desulfurase] + A + AMP + diphosphate + H(+). It participates in tRNA modification. In terms of biological role, catalyzes the ATP-dependent 2-thiolation of cytidine in position 32 of tRNA, to form 2-thiocytidine (s(2)C32). The sulfur atoms are provided by the cysteine/cysteine desulfurase (IscS) system. The chain is tRNA-cytidine(32) 2-sulfurtransferase from Deinococcus geothermalis (strain DSM 11300 / CIP 105573 / AG-3a).